The sequence spans 259 residues: UPF0246 protein Pfl01_0961 (259 aa).

Belongs to the UPF0246 family.

In Pseudomonas fluorescens (strain Pf0-1), this protein is UPF0246 protein Pfl01_0961.